A 423-amino-acid polypeptide reads, in one-letter code: Serine--tRNA ligase (423 aa).

Residue 231–233 participates in L-serine binding; that stretch reads TGE. 262 to 264 is a binding site for ATP; it reads RSE. Residue E285 participates in L-serine binding. Residue 349 to 352 participates in ATP binding; that stretch reads EISS. S385 serves as a coordination point for L-serine.

The protein belongs to the class-II aminoacyl-tRNA synthetase family. Type-1 seryl-tRNA synthetase subfamily. As to quaternary structure, homodimer. The tRNA molecule binds across the dimer.

It is found in the cytoplasm. The catalysed reaction is tRNA(Ser) + L-serine + ATP = L-seryl-tRNA(Ser) + AMP + diphosphate + H(+). It carries out the reaction tRNA(Sec) + L-serine + ATP = L-seryl-tRNA(Sec) + AMP + diphosphate + H(+). It participates in aminoacyl-tRNA biosynthesis; selenocysteinyl-tRNA(Sec) biosynthesis; L-seryl-tRNA(Sec) from L-serine and tRNA(Sec): step 1/1. Catalyzes the attachment of serine to tRNA(Ser). Is also able to aminoacylate tRNA(Sec) with serine, to form the misacylated tRNA L-seryl-tRNA(Sec), which will be further converted into selenocysteinyl-tRNA(Sec). This is Serine--tRNA ligase from Coxiella burnetii (strain RSA 331 / Henzerling II).